Here is a 244-residue protein sequence, read N- to C-terminus: Ubiquitin carboxyl-terminal hydrolase mug105 (244 aa).

Cys42 (nucleophile) is an active-site residue. The active-site Proton acceptor is the His165. Asp183 is an active-site residue.

Belongs to the peptidase C78 family. ZUFSP subfamily.

The protein resides in the cytoplasm. The catalysed reaction is Thiol-dependent hydrolysis of ester, thioester, amide, peptide and isopeptide bonds formed by the C-terminal Gly of ubiquitin (a 76-residue protein attached to proteins as an intracellular targeting signal).. Functionally, deubiquitinase with endodeubiquitinase activity that preferentially cleaves 'Lys-48'-linked polyubiquitin chains. Shows only weak activity against 'Lys-63' and 'Lys-11'-linked chains. Has a role in meiosis. This chain is Ubiquitin carboxyl-terminal hydrolase mug105 (mug105), found in Schizosaccharomyces pombe (strain 972 / ATCC 24843) (Fission yeast).